A 212-amino-acid polypeptide reads, in one-letter code: Large ribosomal subunit protein uL1 (212 aa).

It belongs to the universal ribosomal protein uL1 family. Part of the 50S ribosomal subunit.

In terms of biological role, binds directly to 23S rRNA. Probably involved in E site tRNA release. Functionally, protein L1 is also a translational repressor protein, it controls the translation of its operon by binding to its mRNA. The sequence is that of Large ribosomal subunit protein uL1 from Haloquadratum walsbyi (strain DSM 16790 / HBSQ001).